The primary structure comprises 383 residues: Cobalt-precorrin-5B C(1)-methyltransferase (383 aa).

The tract at residues 1–24 is disordered; the sequence is MQPSARRPFDLATPAPNGLRRGRT.

This sequence belongs to the CbiD family.

It catalyses the reaction Co-precorrin-5B + S-adenosyl-L-methionine = Co-precorrin-6A + S-adenosyl-L-homocysteine. The protein operates within cofactor biosynthesis; adenosylcobalamin biosynthesis; cob(II)yrinate a,c-diamide from sirohydrochlorin (anaerobic route): step 6/10. Functionally, catalyzes the methylation of C-1 in cobalt-precorrin-5B to form cobalt-precorrin-6A. The sequence is that of Cobalt-precorrin-5B C(1)-methyltransferase from Ralstonia nicotianae (strain ATCC BAA-1114 / GMI1000) (Ralstonia solanacearum).